An 894-amino-acid polypeptide reads, in one-letter code: MKELTSSEVRQMFLDFFASKGHEIVPSKNLIPQDDPTLLWINSGVATLKKYFDGSVIPKNPRITNAQKAIRTNDIENVGKTARHHTLFEMMGNFSVGDYFKAEVIPWAWELLTSPEWYGLDKDLLYVTVYPKDQEAKKIWLEKTDLPEGHIYEVEDNFWDIGEGPSGPDSEIFFDRGPAFQNLPDNDPEMYPGGENERYLEIWNIVFSQFNHLPGLTDNAQYPELPHKNIDTGMGLERLVSVFQNGRTNFDTDLFLPIIRATEKMSPDYTYDATKDSESNTSFKVIADHIRAITFAIGDGALPANEGRGYVIRRLLRRAVLHGQKLGIQGEFLTKLVPIVAEIMQSYYPEIADNTEKIQKTIAAEEKRFNATLTGGLSLLNDVIAKAKASGQQVISGADAFKLSDTYGFPLELTQEQAADEGLTVDVVGFNDALQAQRTRARAARSNDKSMGVQNAVLTDLKVPSDYVGWSETEVSNAAIVAIIGHDNQGVDALLANAEPGDSVQLVFDKTPFYAEMGGQVADQGEVLNKQGEVVARVTDTQSAPNGQHVHTVEVVTSFKLGDQVALKVNLARHVAISKNHTATHLLDQTLRNVIGGDVHQAGSLVEPEYLRFDFTHEGPVSEQNLEKIETMVNQVIANNLPITWVETDIESAKKMGAVAVFGEKYGDVVRVVSIGDFNKEFDGGTHAQTTAELGLFKIVSESGIGAGVRRIEAVTGLAALSQFKAEEQALKVIADSLKAQKLTDAPAKVEDLQVEIKTLQRHLTSVEAQLANAAAQDVFKDVKTQNGYQYITAQLQVSGMDGLRQVVDTWRENYPSDVLVLATHVDDKVSLIVAASPEANKKGFKAGDLIKAIAPKIGGGGGGRPDMAQAGGKNPAGINDAFSAVSTFLDELA.

This sequence belongs to the class-II aminoacyl-tRNA synthetase family.

It is found in the cytoplasm. It catalyses the reaction tRNA(Ala) + L-alanine + ATP = L-alanyl-tRNA(Ala) + AMP + diphosphate. Catalyzes the attachment of alanine to tRNA(Ala) in a two-step reaction: alanine is first activated by ATP to form Ala-AMP and then transferred to the acceptor end of tRNA(Ala). Also edits incorrectly charged Ser-tRNA(Ala) and Gly-tRNA(Ala) via its editing domain. This chain is Alanine--tRNA ligase (alaS), found in Leuconostoc citreum (strain KM20).